Consider the following 282-residue polypeptide: NADPH-dependent 7-cyano-7-deazaguanine reductase (282 aa).

Ile-88–Ser-90 is a substrate binding site. NADPH is bound at residue Ser-90–Lys-91. Cys-190 functions as the Thioimide intermediate in the catalytic mechanism. Residue Asp-197 is the Proton donor of the active site. His-229–Glu-230 contributes to the substrate binding site. NADPH is bound at residue Arg-258–Gly-259.

It belongs to the GTP cyclohydrolase I family. QueF type 2 subfamily. As to quaternary structure, homodimer.

The protein localises to the cytoplasm. It carries out the reaction 7-aminomethyl-7-carbaguanine + 2 NADP(+) = 7-cyano-7-deazaguanine + 2 NADPH + 3 H(+). The protein operates within tRNA modification; tRNA-queuosine biosynthesis. In terms of biological role, catalyzes the NADPH-dependent reduction of 7-cyano-7-deazaguanine (preQ0) to 7-aminomethyl-7-deazaguanine (preQ1). The chain is NADPH-dependent 7-cyano-7-deazaguanine reductase from Salmonella paratyphi A (strain ATCC 9150 / SARB42).